The chain runs to 159 residues: RNA pyrophosphohydrolase (159 aa).

In terms of domain architecture, Nudix hydrolase spans 6–149 (GYRPNVGIVI…KRNVYRRMMK (144 aa)). Residues 38–59 (GGINSGETAEQAMFRELFEEVG) carry the Nudix box motif.

This sequence belongs to the Nudix hydrolase family. RppH subfamily. It depends on a divalent metal cation as a cofactor.

In terms of biological role, accelerates the degradation of transcripts by removing pyrophosphate from the 5'-end of triphosphorylated RNA, leading to a more labile monophosphorylated state that can stimulate subsequent ribonuclease cleavage. The polypeptide is RNA pyrophosphohydrolase (Baumannia cicadellinicola subsp. Homalodisca coagulata).